We begin with the raw amino-acid sequence, 113 residues long: Phosphorelay protein LuxU (113 aa).

In terms of domain architecture, HPt spans Gly-18–His-113. His-57 bears the Phosphohistidine mark.

Monomer.

Its function is as follows. Phosphorelay protein which receives sensory signals from a sensory kinase and transmit them to LuxO. At low cell density, a phosphoryl group is transferred from the sensory kinase, probably on His-57 and this phosphoryl group is further transferred to LuxO. This chain is Phosphorelay protein LuxU (luxU), found in Vibrio cholerae serotype O1 (strain ATCC 39315 / El Tor Inaba N16961).